A 425-amino-acid chain; its full sequence is Histidine--tRNA ligase (425 aa).

Belongs to the class-II aminoacyl-tRNA synthetase family. In terms of assembly, homodimer.

It localises to the cytoplasm. It carries out the reaction tRNA(His) + L-histidine + ATP = L-histidyl-tRNA(His) + AMP + diphosphate + H(+). This is Histidine--tRNA ligase from Streptomyces coelicolor (strain ATCC BAA-471 / A3(2) / M145).